Consider the following 1163-residue polypeptide: Zinc finger protein 516 (1163 aa).

Basic and acidic residues predominate over residues 1–13; sequence MDRNREAEMELRR. The tract at residues 1-26 is disordered; sequence MDRNREAEMELRRGPSPTRAGRGHEV. A mediates promoter DNA-binding and activation of transcription region spans residues 1–431; sequence MDRNREAEME…ATRGKVAEPA (431 aa). 7 C2H2-type zinc fingers span residues 34-56, 62-84, 174-197, 200-223, 248-270, 276-298, and 335-357; these read HTCC…MRKH, YKCP…IRSH, VQCS…HQAH, FKCR…ERDH, FPCE…MKKH, HGCH…MKAH, and EVCA…NAIH. The span at 460-469 shows a compositional bias: basic and acidic residues; that stretch reads SQEKRKREQD. Disordered stretches follow at residues 460–512, 533–667, and 679–730; these read SQEK…TGQG, HSRV…QEQH, and HPKQ…APDL. The segment covering 496-507 has biased composition (low complexity); it reads RSAARPNRRAAA. The C2H2-type 8 zinc finger occupies 515–537; that stretch reads SECFECGKIFRTYHQMVLHSRVH. The segment covering 542–552 has biased composition (basic and acidic residues); that stretch reads RERDSDGDRAA. Positions 561-572 are enriched in polar residues; the sequence is EGDSASQPSSPG. Acidic residues predominate over residues 588–598; sequence EAAEDSGEEGA. A compositionally biased stretch (polar residues) spans 615–625; it reads EVTSTELSSGD. Residues 626–641 are compositionally biased toward basic and acidic residues; the sequence is QSHKMGDNASERDTGE. Lysine 643 participates in a covalent cross-link: Glycyl lysine isopeptide (Lys-Gly) (interchain with G-Cter in SUMO2). A compositionally biased stretch (basic and acidic residues) spans 656-667; it reads SSRETSRRQEQH. A Glycyl lysine isopeptide (Lys-Gly) (interchain with G-Cter in SUMO2) cross-link involves residue lysine 681. Positions 706–720 are enriched in basic and acidic residues; sequence PAEKLSDLHNKEHSG. The segment at 760–783 adopts a C2H2-type 9; atypical zinc-finger fold; that stretch reads HPCPYCSHKTYYPEVLWMHKRIWH. Residues 838–1007 form a disordered region; that stretch reads TQVPGGMPGS…PPREPPSKAA (170 aa). Positions 840-857 are enriched in low complexity; that stretch reads VPGGMPGSKSGSSPLGVV. Glycyl lysine isopeptide (Lys-Gly) (interchain with G-Cter in SUMO2) cross-links involve residues lysine 1043 and lysine 1062. The segment at 1098–1120 adopts a C2H2-type 10 zinc-finger fold; sequence FVCIECGKSFHQPGHLRAHMRAH. The segment at 1126-1163 is disordered; sequence SDGPRGSEVHTTSADAPKQGRDHSNTGTVQTVPLRKGT.

Belongs to the krueppel C2H2-type zinc-finger protein family. As to quaternary structure, interacts with PRDM16; the interaction is direct and may play a role in the transcription of brown adipose tissue-specific genes. Interacts with PWWP2B. Interacts with HDAC1; this interaction is enhanced in the presence of PWWP2B.

Its subcellular location is the nucleus. Transcriptional regulator that binds to the promoter and activates the transcription of genes promoting brown adipose tissue (BAT) differentiation. Among brown adipose tissue-specific genes, binds the proximal region of the promoter of the UCP1 gene to activate its transcription and thereby regulate thermogenesis. May also play a role in the cellular response to replication stress. This Homo sapiens (Human) protein is Zinc finger protein 516.